A 588-amino-acid chain; its full sequence is Cation channel sperm-associated protein 2 (588 aa).

Residues 1–106 are Cytoplasmic-facing; sequence MAQEQGHFQL…LWAGWVLDSS (106 aa). A helical membrane pass occupies residues 107–129; sequence VFSKFIISLIFLNTFVLMVEIEL. The Extracellular portion of the chain corresponds to 130–138; it reads MESTNTALW. A helical transmembrane segment spans residues 139-164; the sequence is PVKLALEVADWFILLSFIVEILLMWL. Over 165-173 the chain is Cytoplasmic; the sequence is ASFSLFWKD. Residues 174–198 traverse the membrane as a helical segment; sequence AWNVFDFFVTLLSLLPELVVLLGVP. Topologically, residues 199 to 201 are extracellular; sequence AHS. A helical membrane pass occupies residues 202 to 220; the sequence is VWLQLLRVCRVLRSLKLFA. At 221–237 the chain is on the cytoplasmic side; that stretch reads RFRQIKVILLALVRALK. Residues 238-260 form a helical membrane-spanning segment; that stretch reads SMTFLLMLLLIFFYIFAVTGVYF. Residues 261–279 are Extracellular-facing; it reads FREYSRSTIEGLEYNMFFS. The segment at residues 280 to 292 is an intramembrane region (helical; Pore-forming); the sequence is DLLNSLVTVFILF. At 293–312 the chain is on the extracellular side; that stretch reads TLDHWYAVLQDIWKVPESSR. The chain crosses the membrane as a helical span at residues 313 to 339; it reads VFSSIYVILWLLLGSIIFRNIIVAMMV. Residues 340 to 588 lie on the Cytoplasmic side of the membrane; that stretch reads TNFQNIRSEL…VQALMSFEDK (249 aa). Residues 376–512 form a disordered region; the sequence is SESLRGTSLG…YPVSHSISSH (137 aa). A compositionally biased stretch (acidic residues) spans 390 to 439; that stretch reads DIIETSDASDDDDDDDDDDDDDDDDDDDKSDATESDNEESDSENSESENS. Residues 440–502 show a composition bias toward basic and acidic residues; the sequence is ESEKIDPEKD…KVKEESKEKA (63 aa).

Belongs to the cation channel sperm-associated (TC 1.A.1.19) family. In terms of assembly, component of the CatSper complex or CatSpermasome composed of the core pore-forming members CATSPER1, CATSPER2, CATSPER3 and CATSPER4 as well as auxiliary members CATSPERB, CATSPERG2, CATSPERD, CATSPERE, CATSPERZ, C2CD6/CATSPERT, SLCO6C1, TMEM249, TMEM262 and EFCAB9. HSPA1 may be an additional auxiliary complex member. The core complex members CATSPER1, CATSPER2, CATSPER3 and CATSPER4 form a heterotetrameric channel. The auxiliary CATSPERB, CATSPERG2, CATSPERD and CATSPERE subunits form a pavilion-like structure over the pore which stabilizes the complex through interactions with CATSPER4, CATSPER3, CATSPER1 and CATSPER2 respectively. SLCO6C1 interacts with CATSPERE and TMEM262/CATSPERH interacts with CATSPERB, further stabilizing the complex. C2CD6/CATSPERT interacts at least with CATSPERD and is required for targeting the CatSper complex in the flagellar membrane. Interacts with Ca(v)3.3/CACNA1I, leading to suppression of T-type calcium channel activity. In terms of tissue distribution, testis-specific.

The protein resides in the cell projection. It is found in the cilium. Its subcellular location is the flagellum membrane. It carries out the reaction Ca(2+)(in) = Ca(2+)(out). In contrast to the human ortholog, not activated by progesterone. Activated by intracellular alkalinization. Pore-forming subunit of the CatSper complex, a sperm-specific voltage-gated calcium channel that plays a central role in sperm cell hyperactivation. Controls calcium entry to mediate the hyperactivated motility, a step needed for sperm motility which is essential late in the preparation of sperm for fertilization. The protein is Cation channel sperm-associated protein 2 (Catsper2) of Mus musculus (Mouse).